The following is an 835-amino-acid chain: Leucine--tRNA ligase (835 aa).

Residues 36-46 (PYPSGKIHVGH) carry the 'HIGH' region motif. The 'KMSKS' region signature appears at 602-606 (KMSKS). Lys605 lines the ATP pocket.

Belongs to the class-I aminoacyl-tRNA synthetase family.

It is found in the cytoplasm. The enzyme catalyses tRNA(Leu) + L-leucine + ATP = L-leucyl-tRNA(Leu) + AMP + diphosphate. The sequence is that of Leucine--tRNA ligase from Rickettsia peacockii (strain Rustic).